The sequence spans 684 residues: Ubinuclein-1 (684 aa).

Disordered stretches follow at residues 108–137 (YKGNDSSDGEELDGAPDDDEYDTEDSFIDD), 157–287 (YVNR…LGKS), 311–332 (NVTGSRQSSQASKKDGSNVKSK), 609–631 (MVDRSNQQQPEKLKGISSSCNPT), and 660–684 (PQTRVIPAPQNLNIPRTTPDLNLPS). Acidic residues predominate over residues 114 to 137 (SDGEELDGAPDDDEYDTEDSFIDD). Basic and acidic residues-rich tracts occupy residues 157–167 (YVNRGKLERME) and 184–199 (SAKPCRDAVDVSDKHT). Residues 211–235 (STAPGSWKTQESPLPSGAQDANTSV) are compositionally biased toward polar residues. The span at 238–260 (DDVKHSDRANHQSRNDTSHKSRE) shows a compositional bias: basic and acidic residues. Polar residues-rich tracts occupy residues 261–284 (TGSSSALHQKYSNKSLHQQSTSLL), 311–321 (NVTGSRQSSQA), 611–631 (DRSNQQQPEKLKGISSSCNPT), and 669–684 (QNLNIPRTTPDLNLPS).

This sequence belongs to the ubinuclein family. Component of the HIRA complex made of UBN1, UBN2, ASF1A, CABIN1 and HIRA. Interacts with HIRA.

It is found in the nucleus. Its subcellular location is the nucleolus. In terms of biological role, may be required for replication-independent chromatin assembly. This Arabidopsis thaliana (Mouse-ear cress) protein is Ubinuclein-1.